Consider the following 76-residue polypeptide: Potassium/proton antiporter CemA (76 aa).

A helical membrane pass occupies residues 35-52 (QILSCLVSIFPVILDTIF).

Belongs to the CemA family.

It localises to the plastid. The protein resides in the chloroplast inner membrane. The catalysed reaction is K(+)(in) + H(+)(out) = K(+)(out) + H(+)(in). Functionally, contributes to K(+)/H(+) antiport activity by supporting proton efflux to control proton extrusion and homeostasis in chloroplasts in a light-dependent manner to modulate photosynthesis. Prevents excessive induction of non-photochemical quenching (NPQ) under continuous-light conditions. Indirectly promotes efficient inorganic carbon uptake into chloroplasts. In Vicia faba (Broad bean), this protein is Potassium/proton antiporter CemA.